Here is a 158-residue protein sequence, read N- to C-terminus: Transcription elongation factor GreA (158 aa).

The stretch at 4 to 75 forms a coiled coil; it reads EKTYPMTQEG…TQLENMIRNA (72 aa).

This sequence belongs to the GreA/GreB family.

In terms of biological role, necessary for efficient RNA polymerase transcription elongation past template-encoded arresting sites. The arresting sites in DNA have the property of trapping a certain fraction of elongating RNA polymerases that pass through, resulting in locked ternary complexes. Cleavage of the nascent transcript by cleavage factors such as GreA or GreB allows the resumption of elongation from the new 3'terminus. GreA releases sequences of 2 to 3 nucleotides. The sequence is that of Transcription elongation factor GreA from Bacillus cereus (strain ATCC 10987 / NRS 248).